The chain runs to 1388 residues: DNA-directed RNA polymerase subunit beta (1388 aa).

It belongs to the RNA polymerase beta chain family. The RNAP catalytic core consists of 2 alpha, 1 beta, 1 beta' and 1 omega subunit. When a sigma factor is associated with the core the holoenzyme is formed, which can initiate transcription.

It carries out the reaction RNA(n) + a ribonucleoside 5'-triphosphate = RNA(n+1) + diphosphate. Its function is as follows. DNA-dependent RNA polymerase catalyzes the transcription of DNA into RNA using the four ribonucleoside triphosphates as substrates. The protein is DNA-directed RNA polymerase subunit beta of Stenotrophomonas maltophilia (strain K279a).